The following is a 395-amino-acid chain: D-alanine--D-alanine ligase (395 aa).

Residues 172–391 form the ATP-grasp domain; sequence KVVLDAAGIP…YTELITRLIE (220 aa). 204 to 266 is an ATP binding site; sequence DAGLTYPLFV…EQGIDGREIE (63 aa). Residues Asp-345, Glu-358, and Asn-360 each contribute to the Mg(2+) site.

It belongs to the D-alanine--D-alanine ligase family. Mg(2+) serves as cofactor. Requires Mn(2+) as cofactor.

Its subcellular location is the cytoplasm. The catalysed reaction is 2 D-alanine + ATP = D-alanyl-D-alanine + ADP + phosphate + H(+). It functions in the pathway cell wall biogenesis; peptidoglycan biosynthesis. In terms of biological role, cell wall formation. In Bifidobacterium longum (strain DJO10A), this protein is D-alanine--D-alanine ligase.